A 242-amino-acid chain; its full sequence is Pyridoxine 5'-phosphate synthase (242 aa).

N6 is a binding site for 3-amino-2-oxopropyl phosphate. 8–9 (DH) contacts 1-deoxy-D-xylulose 5-phosphate. A 3-amino-2-oxopropyl phosphate-binding site is contributed by R17. H42 serves as the catalytic Proton acceptor. Residues R44 and H49 each coordinate 1-deoxy-D-xylulose 5-phosphate. Catalysis depends on E69, which acts as the Proton acceptor. T99 is a binding site for 1-deoxy-D-xylulose 5-phosphate. Catalysis depends on H190, which acts as the Proton donor. 3-amino-2-oxopropyl phosphate is bound by residues G191 and 212-213 (GH).

The protein belongs to the PNP synthase family. Homooctamer; tetramer of dimers.

It is found in the cytoplasm. It catalyses the reaction 3-amino-2-oxopropyl phosphate + 1-deoxy-D-xylulose 5-phosphate = pyridoxine 5'-phosphate + phosphate + 2 H2O + H(+). The protein operates within cofactor biosynthesis; pyridoxine 5'-phosphate biosynthesis; pyridoxine 5'-phosphate from D-erythrose 4-phosphate: step 5/5. Functionally, catalyzes the complicated ring closure reaction between the two acyclic compounds 1-deoxy-D-xylulose-5-phosphate (DXP) and 3-amino-2-oxopropyl phosphate (1-amino-acetone-3-phosphate or AAP) to form pyridoxine 5'-phosphate (PNP) and inorganic phosphate. In Neisseria meningitidis serogroup B (strain ATCC BAA-335 / MC58), this protein is Pyridoxine 5'-phosphate synthase.